The primary structure comprises 556 residues: Formate--tetrahydrofolate ligase (556 aa).

ATP is bound at residue 65 to 72; the sequence is TPAGEGKT.

It belongs to the formate--tetrahydrofolate ligase family.

It catalyses the reaction (6S)-5,6,7,8-tetrahydrofolate + formate + ATP = (6R)-10-formyltetrahydrofolate + ADP + phosphate. It participates in one-carbon metabolism; tetrahydrofolate interconversion. The polypeptide is Formate--tetrahydrofolate ligase (Agathobacter rectalis (strain ATCC 33656 / DSM 3377 / JCM 17463 / KCTC 5835 / VPI 0990) (Eubacterium rectale)).